The primary structure comprises 82 residues: Small ribosomal subunit protein bS16 (82 aa).

It belongs to the bacterial ribosomal protein bS16 family.

The chain is Small ribosomal subunit protein bS16 from Alcanivorax borkumensis (strain ATCC 700651 / DSM 11573 / NCIMB 13689 / SK2).